The sequence spans 462 residues: MGSIEPPNASSCLVYQTITEFADFPDHDQKLWWHSTAPMFAEMLKVAGYDIHSRYKALGLYQKFIIPFLGVYPTKTNDRWLSILTRYGTPFELSLNCTHSVVRYTFEPINAATGSLKDPFNTHAIWDALDTLIPLQKGIDLEFFAHLKRDLTVNDQDTAYLLEKKKVGGQIRTQNKLALDLKGGEFVLKAYIYPALKSLATGKPVQELMFDSVHRLSHQYPTLAAPLRKLEEYVHSRGTSSTASPRLISCDLCDPRQSRIKIYLLELNVSLESMEDLWTLGGRRNDTQTLAGLEMIRELWDLINLPTGILSYPEPYLKLGEVPNEQLPLMANYTLHHDDPMPEPQVYFTTFGMNDGRVTDGLATFFRRHGYTHMLQTYRDSLRAYYPHVDHDTVNYLHAYISFSYRKGSPYLSVYLQSFETGDWPISSFGAPILEPVSKKMCRGHPVSFEVPLTKQQVVASE.

Residues 83-84 (IL) and Glu-92 each bind L-tryptophan. Substrate is bound by residues Arg-103, Lys-189, and Tyr-191. Residues Tyr-193 and Arg-246 each contribute to the L-tryptophan site. Positions 259, 261, 263, 345, and 347 each coordinate substrate.

Belongs to the tryptophan dimethylallyltransferase family. As to quaternary structure, homodimer.

It carries out the reaction L-tryptophan + dimethylallyl diphosphate = 4-(3-methylbut-2-enyl)-L-tryptophan + diphosphate. The protein operates within alkaloid biosynthesis; ergot alkaloid biosynthesis. Functionally, tryptophan dimethylallyltransferase; part of the gene cluster that mediates the biosynthesis of isofumigaclavines, fungal ergot alkaloids. The tryptophan dimethylallyltransferase ifgA catalyzes the first step of ergot alkaloid biosynthesis by condensing dimethylallyl diphosphate (DMAP) and tryptophan to form 4-dimethylallyl-L-tryptophan. The second step is catalyzed by the methyltransferase ifgB that methylates 4-dimethylallyl-L-tryptophan in the presence of S-adenosyl-L-methionine, resulting in the formation of N-methyl-dimethylallyl-L-tryptophan. The catalase ifgD and the FAD-dependent oxidoreductase ifgC then transform N-methyl-dimethylallyl-L-tryptophan to chanoclavine-I which is further oxidized by ifgE in the presence of NAD(+), resulting in the formation of chanoclavine-I aldehyde. The chanoclavine-I aldehyde reductases ifgG and/or fgaOx3 reduce chanoclavine-I aldehyde to dihydrochanoclavine-I aldehyde that spontaneously dehydrates to form 6,8-dimethyl-6,7-didehydroergoline. The festuclavine dehydrogenases ifgF1 and/or ifgF2 then catalyze the reduction of 6,8-dimethyl-6,7-didehydroergoline to form festuclavine. Hydrolysis of festuclavine by a yet undetermined cytochrome P450 monooxygenase (called ifgH) then leads to the formation of isofumigaclavine B which is in turn acetylated by ifgI to isofumigaclavine A. Penicillium roqueforti has interestingly at least two sets of genes for the consumption of chanoclavine-I aldehyde on three different loci, the OYEs ifgG/fgaOx3 and the festuclavine synthase homologs ifgF1/ifgF2. The reason for the duplication of these genes is unclear, probably to ensure the conversion of chanoclavine-I aldehyde by differential gene expression under various environmental conditions. The polypeptide is Tryptophan dimethylallyltransferase ifgA (Penicillium roqueforti (strain FM164)).